We begin with the raw amino-acid sequence, 358 residues long: Peptide chain release factor 1 (358 aa).

Glutamine 233 is modified (N5-methylglutamine).

It belongs to the prokaryotic/mitochondrial release factor family. Post-translationally, methylated by PrmC. Methylation increases the termination efficiency of RF1.

It is found in the cytoplasm. Its function is as follows. Peptide chain release factor 1 directs the termination of translation in response to the peptide chain termination codons UAG and UAA. The polypeptide is Peptide chain release factor 1 (Geobacillus kaustophilus (strain HTA426)).